Reading from the N-terminus, the 151-residue chain is 3-hydroxyacyl-[acyl-carrier-protein] dehydratase FabZ (151 aa).

Residue His-54 is part of the active site.

This sequence belongs to the thioester dehydratase family. FabZ subfamily.

It is found in the cytoplasm. It catalyses the reaction a (3R)-hydroxyacyl-[ACP] = a (2E)-enoyl-[ACP] + H2O. Functionally, involved in unsaturated fatty acids biosynthesis. Catalyzes the dehydration of short chain beta-hydroxyacyl-ACPs and long chain saturated and unsaturated beta-hydroxyacyl-ACPs. This Sodalis glossinidius (strain morsitans) protein is 3-hydroxyacyl-[acyl-carrier-protein] dehydratase FabZ.